We begin with the raw amino-acid sequence, 338 residues long: Lumican (338 aa).

Positions M1 to G18 are cleaved as a signal peptide. Q19 carries the post-translational modification Pyrrolidone carboxylic acid. 4 positions are modified to sulfotyrosine: Y20, Y21, Y23, and Y30. The 39-residue stretch at F28–P66 folds into the LRRNT domain. LRR repeat units follow at residues G67–N88, D91–K114, Q117–K137, S138–V159, N160–K181, S185–T205, S206–R227, and G230–S250. N88 carries an N-linked (GlcNAc...) (keratan sulfate) asparagine glycan. An N-linked (GlcNAc...) (keratan sulfate) asparagine glycan is attached at N127. N160 is a glycosylation site (N-linked (GlcNAc...) (keratan sulfate) asparagine). Residue N252 is glycosylated (N-linked (GlcNAc...) (keratan sulfate) asparagine). LRR repeat units lie at residues S255–L276 and E277–K296. An intrachain disulfide couples C295 to C328. S304 carries the phosphoserine modification. One copy of the LRR 11 repeat lies at K305–Y326.

The protein belongs to the small leucine-rich proteoglycan (SLRP) family. SLRP class II subfamily. In terms of assembly, binds to laminin. Contains keratan sulfate.

The protein localises to the secreted. It localises to the extracellular space. It is found in the extracellular matrix. The polypeptide is Lumican (Lum) (Rattus norvegicus (Rat)).